We begin with the raw amino-acid sequence, 219 residues long: Phosphoribosylformylglycinamidine synthase subunit PurQ (219 aa).

In terms of domain architecture, Glutamine amidotransferase type-1 spans K2–S219. Catalysis depends on C86, which acts as the Nucleophile. Catalysis depends on residues H195 and E197.

In terms of assembly, part of the FGAM synthase complex composed of 1 PurL, 1 PurQ and 2 PurS subunits.

It localises to the cytoplasm. It catalyses the reaction N(2)-formyl-N(1)-(5-phospho-beta-D-ribosyl)glycinamide + L-glutamine + ATP + H2O = 2-formamido-N(1)-(5-O-phospho-beta-D-ribosyl)acetamidine + L-glutamate + ADP + phosphate + H(+). It carries out the reaction L-glutamine + H2O = L-glutamate + NH4(+). It participates in purine metabolism; IMP biosynthesis via de novo pathway; 5-amino-1-(5-phospho-D-ribosyl)imidazole from N(2)-formyl-N(1)-(5-phospho-D-ribosyl)glycinamide: step 1/2. Functionally, part of the phosphoribosylformylglycinamidine synthase complex involved in the purines biosynthetic pathway. Catalyzes the ATP-dependent conversion of formylglycinamide ribonucleotide (FGAR) and glutamine to yield formylglycinamidine ribonucleotide (FGAM) and glutamate. The FGAM synthase complex is composed of three subunits. PurQ produces an ammonia molecule by converting glutamine to glutamate. PurL transfers the ammonia molecule to FGAR to form FGAM in an ATP-dependent manner. PurS interacts with PurQ and PurL and is thought to assist in the transfer of the ammonia molecule from PurQ to PurL. In Leptospira interrogans serogroup Icterohaemorrhagiae serovar copenhageni (strain Fiocruz L1-130), this protein is Phosphoribosylformylglycinamidine synthase subunit PurQ.